We begin with the raw amino-acid sequence, 195 residues long: Elongation factor Ts (195 aa).

The tract at residues T81–V84 is involved in Mg(2+) ion dislocation from EF-Tu.

It belongs to the EF-Ts family.

It localises to the cytoplasm. Associates with the EF-Tu.GDP complex and induces the exchange of GDP to GTP. It remains bound to the aminoacyl-tRNA.EF-Tu.GTP complex up to the GTP hydrolysis stage on the ribosome. The protein is Elongation factor Ts of Rubrobacter xylanophilus (strain DSM 9941 / JCM 11954 / NBRC 16129 / PRD-1).